Consider the following 187-residue polypeptide: Adenylate kinase (187 aa).

10–15 serves as a coordination point for ATP; it reads GSGKGT. The NMP stretch occupies residues 30-59; the sequence is STGDLLRSEVVAGTPLGLQAKQVMAQGDLV. Residues threonine 31, arginine 36, 57–59, 85–88, and glutamine 92 each bind AMP; these read DLV and GYPR. The segment at 126–136 is LID; the sequence is GRAQAEGREDD. Arginine 127 provides a ligand contact to ATP. Positions 133 and 144 each coordinate AMP. Residue glycine 172 participates in ATP binding.

Belongs to the adenylate kinase family. As to quaternary structure, monomer.

The protein localises to the cytoplasm. It catalyses the reaction AMP + ATP = 2 ADP. Its pathway is purine metabolism; AMP biosynthesis via salvage pathway; AMP from ADP: step 1/1. In terms of biological role, catalyzes the reversible transfer of the terminal phosphate group between ATP and AMP. Plays an important role in cellular energy homeostasis and in adenine nucleotide metabolism. This is Adenylate kinase from Xylella fastidiosa (strain M23).